Reading from the N-terminus, the 547-residue chain is Chaperonin GroEL (547 aa).

ATP contacts are provided by residues Thr-29 to Pro-32, Asp-86 to Thr-90, Gly-413, Asn-479 to Ala-481, and Asp-495.

The protein belongs to the chaperonin (HSP60) family. Forms a cylinder of 14 subunits composed of two heptameric rings stacked back-to-back. Interacts with the co-chaperonin GroES.

It is found in the cytoplasm. It catalyses the reaction ATP + H2O + a folded polypeptide = ADP + phosphate + an unfolded polypeptide.. Together with its co-chaperonin GroES, plays an essential role in assisting protein folding. The GroEL-GroES system forms a nano-cage that allows encapsulation of the non-native substrate proteins and provides a physical environment optimized to promote and accelerate protein folding. This chain is Chaperonin GroEL, found in Synechococcus sp. (strain RCC307).